Here is a 358-residue protein sequence, read N- to C-terminus: Magnesium-protoporphyrin IX monomethyl ester [oxidative] cyclase 2 (358 aa).

Belongs to the AcsF family. Requires Fe cation as cofactor.

It carries out the reaction Mg-protoporphyrin IX 13-monomethyl ester + 3 NADPH + 3 O2 + 2 H(+) = 3,8-divinyl protochlorophyllide a + 3 NADP(+) + 5 H2O. Its pathway is porphyrin-containing compound metabolism; chlorophyll biosynthesis (light-independent). Its function is as follows. Catalyzes the formation of the isocyclic ring in chlorophyll biosynthesis. Mediates the cyclase reaction, which results in the formation of divinylprotochlorophyllide (Pchlide) characteristic of all chlorophylls from magnesium-protoporphyrin IX 13-monomethyl ester (MgPMME). The polypeptide is Magnesium-protoporphyrin IX monomethyl ester [oxidative] cyclase 2 (Synechocystis sp. (strain ATCC 27184 / PCC 6803 / Kazusa)).